The primary structure comprises 1307 residues: TBC1 domain family member 4 (1307 aa).

Residue methionine 1 is modified to N-acetylmethionine. A disordered region spans residues 1 to 30 (MESPSCIQDEPFPHPLEPEPSAPAQPGATK). Pro residues predominate over residues 13 to 23 (PHPLEPEPSAP). The PID 1 domain occupies 53 to 209 (PMLPWLMAEI…QKFEVLYCGR (157 aa)). Residues 237-246 (LKLQGERGGD) are compositionally biased toward basic and acidic residues. Residues 237–276 (LKLQGERGGDPGDEMGVLEVESPVSPDDSLPEKADGTVNS) form a disordered region. A phosphoserine mark is found at serine 258, serine 261, and serine 320. The region spanning 319-475 (RSRCSSVTGV…HSLHKLCERI (157 aa)) is the PID 2 domain. Serine 324 and serine 348 each carry phosphoserine; by PKB/AKT1. The interval 330-360 (QKKVHENNQKTQPRRRHASAPSHVQPSDSEK) is disordered. Phosphoserine is present on serine 351. Lysine 484 is subject to N6-acetyllysine. Phosphoserine is present on serine 573. Threonine 575 carries the post-translational modification Phosphothreonine. At serine 577 the chain carries Phosphoserine; by PKB/AKT1. Arginine 584 is modified (omega-N-methylarginine). Residue serine 595 is modified to Phosphoserine; by PKB/AKT1. A phosphoserine mark is found at serine 598 and serine 616. Disordered regions lie at residues 603–684 (NSLA…SEQC) and 732–774 (SPQY…PVTP). The segment covering 615–624 (DSPPGTPPAS) has biased composition (pro residues). A Phosphothreonine modification is found at threonine 620. Phosphoserine is present on serine 624. The residue at position 649 (threonine 649) is a Phosphothreonine; by PKB/AKT1. A Phosphoserine modification is found at serine 673. The segment covering 757–767 (SSTCSNESLNA) has biased composition (polar residues). A Phosphoserine; by PKB/AKT1 modification is found at serine 758. Phosphoserine is present on residues serine 761 and serine 764. A Phosphothreonine modification is found at threonine 770. A Rab-GAP TBC domain is found at 927–1121 (GVPKSRRGEI…RVFDIIFLQG (195 aa)).

Phosphorylated by AKT1; insulin-induced. Also phosphorylated by AMPK in response to insulin. Insulin-stimulated phosphorylation is required for SLC2A4/GLUT4 translocation. Has no effect on SLC2A4/GLUT4 internalization. Widely expressed, including in pancreatic beta cells.

The protein resides in the cytoplasm. May act as a GTPase-activating protein for RAB2A, RAB8A, RAB10 and RAB14. Promotes insulin-induced glucose transporter SLC2A4/GLUT4 translocation at the plasma membrane, thus increasing glucose uptake. This is TBC1 domain family member 4 (Tbc1d4) from Mus musculus (Mouse).